The chain runs to 128 residues: Small ribosomal subunit protein uS12 (128 aa).

Residues 1–29 (MPTINQLIRKGREPKERKSKSPALMGNPQ) are disordered. Asp-89 carries the post-translational modification 3-methylthioaspartic acid. Residues 106–128 (GVEGRRQGRSKYGAKRPKEGGKK) are disordered.

This sequence belongs to the universal ribosomal protein uS12 family. As to quaternary structure, part of the 30S ribosomal subunit. Contacts proteins S8 and S17. May interact with IF1 in the 30S initiation complex.

Its function is as follows. With S4 and S5 plays an important role in translational accuracy. Functionally, interacts with and stabilizes bases of the 16S rRNA that are involved in tRNA selection in the A site and with the mRNA backbone. Located at the interface of the 30S and 50S subunits, it traverses the body of the 30S subunit contacting proteins on the other side and probably holding the rRNA structure together. The combined cluster of proteins S8, S12 and S17 appears to hold together the shoulder and platform of the 30S subunit. This is Small ribosomal subunit protein uS12 from Dictyoglomus turgidum (strain DSM 6724 / Z-1310).